The sequence spans 656 residues: Phosphatidylinositol 4,5-bisphosphate-binding protein SLM2 (656 aa).

The 111-residue stretch at 445–555 folds into the PH domain; it reads FEVKSGFLEK…WFGNIKALSS (111 aa). Positions 577 to 605 are disordered; sequence AKSNENTTESVTPQVTNEQHTRYDDVSSS. Polar residues predominate over residues 580–594; that stretch reads NENTTESVTPQVTNE. S626 carries the phosphoserine modification. The PXIXIT-like, required for interaction with CNA1 and CNA2, and calcineurin-dependent dephosphorylation motif lies at 640-645; it reads PEFYIE. Residues S649 and S653 each carry the phosphoserine modification.

Heterodimer of SLM1-SLM2. Binds phosphatidylinositol 4,5-bisphosphate, which is required for function. Interacts with the TORC2 subunits AVO2, BIT61 and TOR2. Interacts with the calcineurin catalytic subunits CNA1 and CNA2.

It localises to the cell membrane. Together with SLM1, effector of the TORC2- and calcineurin-signaling pathways. Phosphorylated and activated by TORC2 under favorable growth conditions. Mediates actin polarization via inhibition of calcineurin-dependent transcription. Upon nutrient limitation or environmental stress, gets dephosphorylated by calcineurin, inhibiting interaction with TORC2, thereby antagonizing TORC2 signaling and mediating calcineurin-dependent actin depolarization. Also functions in heat-induced, calcineurin-mediated uracil permease (FUR4) endocytosis. The chain is Phosphatidylinositol 4,5-bisphosphate-binding protein SLM2 (SLM2) from Saccharomyces cerevisiae (strain ATCC 204508 / S288c) (Baker's yeast).